We begin with the raw amino-acid sequence, 197 residues long: ATP-dependent Clp protease proteolytic subunit 2 (197 aa).

Ser-96 (nucleophile) is an active-site residue. His-121 is an active-site residue.

This sequence belongs to the peptidase S14 family. In terms of assembly, fourteen ClpP subunits assemble into 2 heptameric rings which stack back to back to give a disk-like structure with a central cavity, resembling the structure of eukaryotic proteasomes.

It localises to the cytoplasm. The catalysed reaction is Hydrolysis of proteins to small peptides in the presence of ATP and magnesium. alpha-casein is the usual test substrate. In the absence of ATP, only oligopeptides shorter than five residues are hydrolyzed (such as succinyl-Leu-Tyr-|-NHMec, and Leu-Tyr-Leu-|-Tyr-Trp, in which cleavage of the -Tyr-|-Leu- and -Tyr-|-Trp bonds also occurs).. Its function is as follows. Cleaves peptides in various proteins in a process that requires ATP hydrolysis. Has a chymotrypsin-like activity. Plays a major role in the degradation of misfolded proteins. The sequence is that of ATP-dependent Clp protease proteolytic subunit 2 from Synechococcus sp. (strain CC9605).